The chain runs to 192 residues: Adapter protein MecA (192 aa).

It belongs to the MecA family. As to quaternary structure, homodimer.

In terms of biological role, enables the recognition and targeting of unfolded and aggregated proteins to the ClpC protease or to other proteins involved in proteolysis. Acts negatively in the development of competence by binding ComK and recruiting it to the ClpCP protease. When overexpressed, inhibits sporulation. Also involved in Spx degradation by ClpC. The polypeptide is Adapter protein MecA (Oceanobacillus iheyensis (strain DSM 14371 / CIP 107618 / JCM 11309 / KCTC 3954 / HTE831)).